Here is a 439-residue protein sequence, read N- to C-terminus: ATP-dependent protease ATPase subunit HslU (439 aa).

ATP contacts are provided by residues Ile17, 59–64 (GVGKTE), Asp251, Glu317, and Arg389.

It belongs to the ClpX chaperone family. HslU subfamily. In terms of assembly, a double ring-shaped homohexamer of HslV is capped on each side by a ring-shaped HslU homohexamer. The assembly of the HslU/HslV complex is dependent on binding of ATP.

The protein localises to the cytoplasm. ATPase subunit of a proteasome-like degradation complex; this subunit has chaperone activity. The binding of ATP and its subsequent hydrolysis by HslU are essential for unfolding of protein substrates subsequently hydrolyzed by HslV. HslU recognizes the N-terminal part of its protein substrates and unfolds these before they are guided to HslV for hydrolysis. This is ATP-dependent protease ATPase subunit HslU from Campylobacter jejuni subsp. doylei (strain ATCC BAA-1458 / RM4099 / 269.97).